Consider the following 2128-residue polypeptide: Spectrin beta chain, erythrocytic (2128 aa).

The span at 1 to 15 (MTSATEFENVGNQPP) shows a compositional bias: polar residues. The segment at 1–30 (MTSATEFENVGNQPPFSRINARWDAPDDEL) is disordered. Residues 2 to 275 (TSATEFENVG…IITYVVAFYH (274 aa)) are actin-binding. Position 36 is a phosphoserine (Ser36). Calponin-homology (CH) domains lie at 54-158 (VVQK…LRFQ) and 173-278 (RSAK…HYFS). Position 104 is a phosphothreonine (Thr104). 17 Spectrin repeats span residues 303–411 (MIEK…LALR), 416–517 (RQEF…QRLE), 521–627 (ALQK…QLEQ), 630–733 (RLWK…DLQD), 736–838 (NFFQ…KLQE), 845–942 (VFGE…REAV), 950–1050 (NYCV…LSLG), 1054–1157 (KLQA…NTLT), 1162–1250 (FQEF…RHKK), 1267–1368 (ELQN…EQLS), 1381–1455 (ADLN…FLDL), 1473–1574 (LQIS…RLRD), 1576–1680 (HEAQ…RLEN), 1682–1784 (YHLF…MQLL), 1789–1890 (DLHR…RAQL), 1897–1997 (FRFF…DRLH), and 2004–2064 (QFSR…KPTT). Ser1289 carries the phosphoserine modification. Position 2034 is a phosphoserine (Ser2034). Residues 2062 to 2108 (PTTLELKERQTPERPTEEPGPQEEEGETAGEAPQVHHAATERTSPVS) are disordered. Residues Thr2064, Thr2072, and Thr2101 each carry the phosphothreonine modification. Residues 2066–2078 (ELKERQTPERPTE) are compositionally biased toward basic and acidic residues. Phosphoserine occurs at positions 2105, 2108, 2114, 2116, and 2119.

This sequence belongs to the spectrin family. As to quaternary structure, composed of nonhomologous chains, alpha and beta, which aggregate to form dimers, tetramers, and higher polymers. Interacts with BCAM.

It is found in the cytoplasm. It localises to the cytoskeleton. Its subcellular location is the cell cortex. Spectrin is the major constituent of the cytoskeletal network underlying the erythrocyte plasma membrane. It associates with band 4.1 and actin to form the cytoskeletal superstructure of the erythrocyte plasma membrane. This chain is Spectrin beta chain, erythrocytic (Sptb), found in Mus musculus (Mouse).